A 572-amino-acid polypeptide reads, in one-letter code: Galectin-3-binding protein B (572 aa).

The N-terminal stretch at 1 to 14 is a signal peptide; the sequence is MLLLWPLLFLQVSA. In terms of domain architecture, SRCR spans 32 to 131; the sequence is VRLVGVIPSS…HKEDAGVICA (100 aa). 3 disulfides stabilise this stretch: C56-C120, C69-C130, and C100-C110. N-linked (GlcNAc...) asparagine glycosylation is found at N135, N195, and N202. A BTB domain is found at 164 to 231; it reads CDFTIAVRDL…LYTRQIDVST (68 aa). Positions 270-372 constitute a BACK domain; it reads QVSMYEYGVR…IPVDKLYDIQ (103 aa). 2 N-linked (GlcNAc...) asparagine glycosylation sites follow: N430 and N548.

Its subcellular location is the secreted. The protein resides in the extracellular space. It localises to the extracellular matrix. Its function is as follows. Promotes integrin-mediated cell adhesion. In Danio rerio (Zebrafish), this protein is Galectin-3-binding protein B (lgals3bpb).